Reading from the N-terminus, the 467-residue chain is Chromosomal replication initiator protein DnaA (467 aa).

Residues methionine 1–histidine 84 are domain I, interacts with DnaA modulators. The tract at residues histidine 84–proline 125 is domain II. Residues alanine 89–alanine 108 are disordered. The segment covering isoleucine 96 to alanine 108 has biased composition (polar residues). Residues aspartate 126–valine 342 are domain III, AAA+ region. Residues glycine 170, glycine 172, lysine 173, and threonine 174 each coordinate ATP. The tract at residues serine 343 to serine 467 is domain IV, binds dsDNA.

Belongs to the DnaA family. As to quaternary structure, oligomerizes as a right-handed, spiral filament on DNA at oriC.

It localises to the cytoplasm. Its function is as follows. Plays an essential role in the initiation and regulation of chromosomal replication. ATP-DnaA binds to the origin of replication (oriC) to initiate formation of the DNA replication initiation complex once per cell cycle. Binds the DnaA box (a 9 base pair repeat at the origin) and separates the double-stranded (ds)DNA. Forms a right-handed helical filament on oriC DNA; dsDNA binds to the exterior of the filament while single-stranded (ss)DNA is stabiized in the filament's interior. The ATP-DnaA-oriC complex binds and stabilizes one strand of the AT-rich DNA unwinding element (DUE), permitting loading of DNA polymerase. After initiation quickly degrades to an ADP-DnaA complex that is not apt for DNA replication. Binds acidic phospholipids. The protein is Chromosomal replication initiator protein DnaA of Synechococcus sp. (strain JA-2-3B'a(2-13)) (Cyanobacteria bacterium Yellowstone B-Prime).